Here is a 361-residue protein sequence, read N- to C-terminus: MKNRNPLIRKLLTQYFVTTGILLAFLVMIPLVIRFIAGTRTWYGTEPIYYILRFFADRWLFCVAIGALLIWFGTTIYYMTKAIGYLNETIQATTQLIEEPSKRITLSSHLIDVQEEMNQLREKSLQDQRAAKEAEQRKNDLIVYLAHDLRTPLTSVIGYLTLLKEEPQLSNAMRNRYTEIALQKAQRLELLISEFFEITRFNLTTIVLQTETTDLSLMLEQLTFEFLPLLEEKNLNWQLNLQKNVLATVDTEKIARVFDNLIRNAINYSYPDSPLLLELVESDSIHIRLTNRGKTIPEEMIGRLFEPFYRMDSSRATATSGTGLGLPIAKEILLASGGDISAESKDETIIFNVRLPKPANN.

2 helical membrane-spanning segments follow: residues Phe-16 to Ile-36 and Trp-59 to Met-79. In terms of domain architecture, Histidine kinase spans Tyr-144–Ala-359. His-147 carries the post-translational modification Phosphohistidine; by autocatalysis. Glu-252 contributes to the Mg(2+) binding site.

Autophosphorylated.

Its subcellular location is the membrane. The catalysed reaction is ATP + protein L-histidine = ADP + protein N-phospho-L-histidine.. This Enterococcus gallinarum protein is Sensor protein VanSC.